Here is a 410-residue protein sequence, read N- to C-terminus: Large ribosomal subunit protein uL4 (410 aa).

The protein belongs to the universal ribosomal protein uL4 family.

It is found in the cytoplasm. The sequence is that of Large ribosomal subunit protein uL4 (RPL4) from Tetrahymena thermophila (strain SB210).